The sequence spans 215 residues: ATP-dependent dethiobiotin synthetase BioD (215 aa).

ATP is bound at residue 13-18; that stretch reads DIGKTV. Residue Thr-17 coordinates Mg(2+). Lys-38 is a catalytic residue. A substrate-binding site is contributed by Thr-42. Residues Asp-50, 115–118, and 175–176 each bind ATP; these read EGAG and NH. Mg(2+) contacts are provided by Asp-50 and Glu-115.

Belongs to the dethiobiotin synthetase family. As to quaternary structure, homodimer. Mg(2+) is required as a cofactor.

It localises to the cytoplasm. The catalysed reaction is (7R,8S)-7,8-diammoniononanoate + CO2 + ATP = (4R,5S)-dethiobiotin + ADP + phosphate + 3 H(+). Its pathway is cofactor biosynthesis; biotin biosynthesis; biotin from 7,8-diaminononanoate: step 1/2. Catalyzes a mechanistically unusual reaction, the ATP-dependent insertion of CO2 between the N7 and N8 nitrogen atoms of 7,8-diaminopelargonic acid (DAPA, also called 7,8-diammoniononanoate) to form a ureido ring. The polypeptide is ATP-dependent dethiobiotin synthetase BioD (Neisseria meningitidis serogroup B (strain ATCC BAA-335 / MC58)).